We begin with the raw amino-acid sequence, 88 residues long: uncharacterized protein (88 aa).

A run of 2 helical transmembrane segments spans residues 27 to 46 and 61 to 83; these read LFIFRVLNVVSIAILFETPH and SMCLYNCYCLYNVVTFSLNLILI.

It is found in the membrane. This is an uncharacterized protein from Saccharomyces cerevisiae (strain ATCC 204508 / S288c) (Baker's yeast).